The following is a 571-amino-acid chain: Transcription factor ABORTED MICROSPORES (571 aa).

Residues 275 to 284 (NDKDMNENGR) show a composition bias toward basic and acidic residues. 3 disordered regions span residues 275-321 (NDKD…AERR), 365-390 (ELQD…MSLN), and 536-571 (DDHQ…YHNQ). A bHLH domain is found at 310–359 (GSQAKNLMAERRRRKKLNDRLYALRSLVPRITKLDRASILGDAINYVKEL). Positions 368 to 378 (DELEENSETED) are enriched in acidic residues. Over residues 381–390 (NRPQGGMSLN) the composition is skewed to polar residues. The span at 556-571 (AHHHHHHQHINHYHNQ) shows a compositional bias: basic residues.

As to quaternary structure, homodimer. Interacts with ASHR3. As to expression, mostly expressed in closed, post-meiotic buds, and, to a lower extent, in pre-meiotic buds. Detected in leaves, stems, and flowers.

The protein resides in the nucleus. In terms of biological role, transcription factor. Plays a crucial role in tapetum development. Required for male fertility and pollen differentiation, especially during the post-meiotic transcriptional regulation of microspore development within the developing anther. Binds E-box regions in the AHL16/TEK promoter. In Arabidopsis thaliana (Mouse-ear cress), this protein is Transcription factor ABORTED MICROSPORES (AMS).